Consider the following 1768-residue polypeptide: Gag-Pro-Pol polyprotein (1768 aa).

G2 is lipidated: N-myristoyl glycine; by host. Residues 101–159 (AAVTQTEKILKVSSQTDLRDNSHNKDMDLISLESDDEEAKAPSEKMTMSNKSPKKYPAM) constitute a propeptide that is removed on maturation. The segment at 132-152 (LESDDEEAKAPSEKMTMSNKS) is disordered. Residues 200 to 203 (PPPY) carry the PPXY motif motif. Residues 215 to 251 (AVVNPKEELKEKISQLEEQIKLEELHQSLIIRLQKLK) adopt a coiled-coil conformation. The CCHC-type zinc finger occupies 544–561 (GGCFKCGKKGHFAKDCRD). The segment at 589–622 (KSKTDSQGNPLPPHQGNRDEGPAPGPEASLWGSQ) is disordered. The Peptidase A2 domain maps to 777-853 (FTGLIDTGAD…LPVNLWGRDL (77 aa)). The active-site Protease; shared with dimeric partner is D782. The 47-residue stretch at 864-910 (PNDIVTAQMLAQGYSPGKGLGKREDGILQPIPNSGQLDRKGFGNFLA) folds into the G-patch domain. The Reverse transcriptase domain occupies 956–1144 (LQAGHIIESN…DPYTYLGFQI (189 aa)). Mg(2+)-binding residues include D1021, D1096, D1097, D1367, E1396, D1417, and D1481. The 132-residue stretch at 1358-1489 (LDNALLVFTD…TDLATKVVAT (132 aa)) folds into the RNase H type-1 domain. An Integrase-type zinc finger spans residues 1493 to 1534 (TNLTEAQTAHALHHLNAQSLRLMFKITREQARQIVKQCPTCV). Zn(2+) contacts are provided by H1502, H1506, C1530, and C1533. An Integrase catalytic domain is found at 1547-1708 (KGLVPNMLWQ…AADRFWHTSS (162 aa)). Mg(2+) is bound by residues D1558, D1615, and E1651. The integrase-type DNA-binding region spans 1713-1762 (AMVKWKDPLDNTWHGPDPVLIWGRGSVCVYSQTHDAARWLPERLVRQVSN).

The protein belongs to the retroviral Pol polyprotein family. Homodimer. As to quaternary structure, interacts with the G-patch peptide. In terms of assembly, interacts with the reverse transcriptase/ribonuclease H. Homotrimer. It depends on Mg(2+) as a cofactor. In terms of processing, released by autocatalytic processing. The protease can undergo further autoprocessing to yield 2 shorter but enzymatically active forms of 12 kDa and 13 kDa. Myristoylated. Myristoylation of the matrix (MA) domain mediates the transport and binding of Gag polyproteins to the host plasma membrane and is required for the assembly of viral particles. Post-translationally, specific enzymatic cleavages in vivo yield mature proteins.

The protein resides in the virion. The enzyme catalyses DNA(n) + a 2'-deoxyribonucleoside 5'-triphosphate = DNA(n+1) + diphosphate. It carries out the reaction Endonucleolytic cleavage to 5'-phosphomonoester.. The catalysed reaction is dUTP + H2O = dUMP + diphosphate + H(+). In terms of biological role, matrix protein. Its function is as follows. Nucleocapsid protein p14: Nucleocapsid protein. Functionally, capsid protein. The aspartyl protease mediates proteolytic cleavages of Gag and Gag-Pol polyproteins during or shortly after the release of the virion from the plasma membrane. Cleavages take place as an ordered, step-wise cascade to yield mature proteins. This process is called maturation. Displays maximal activity during the budding process just prior to particle release from the cell. In terms of biological role, enhances the activity of the reverse transcriptase. May be part of the mature RT. Its function is as follows. RT is a multifunctional enzyme that converts the viral dimeric RNA genome into dsDNA in the cytoplasm, shortly after virus entry into the cell. This enzyme displays a DNA polymerase activity that can copy either DNA or RNA templates, and a ribonuclease H (RNase H) activity that cleaves the RNA strand of RNA-DNA heteroduplexes in a partially processive 3' to 5' endonucleasic mode. Conversion of viral genomic RNA into dsDNA requires many steps. A tRNA binds to the primer-binding site (PBS) situated at the 5' end of the viral RNA. RT uses the 3' end of the tRNA primer to perfom a short round of RNA-dependent minus-strand DNA synthesis. The reading proceeds through the U5 region and ends after the repeated (R) region which is present at both ends of viral RNA. The portion of the RNA-DNA heteroduplex is digested by the RNase H, resulting in a ssDNA product attached to the tRNA primer. This ssDNA/tRNA hybridizes with the identical R region situated at the 3' end of viral RNA. This template exchange, known as minus-strand DNA strong stop transfer, can be either intra- or intermolecular. RT uses the 3' end of this newly synthesized short ssDNA to perfom the RNA-dependent minus-strand DNA synthesis of the whole template. RNase H digests the RNA template except for a polypurine tract (PPT) situated at the 5' end of the genome. It is not clear if both polymerase and RNase H activities are simultaneous. RNase H probably can proceed both in a polymerase-dependent (RNA cut into small fragments by the same RT performing DNA synthesis) and a polymerase-independent mode (cleavage of remaining RNA fragments by free RTs). Secondly, RT performs DNA-directed plus-strand DNA synthesis using the PPT that has not been removed by RNase H as primers. PPT and tRNA primers are then removed by RNase H. The 3' and 5' ssDNA PBS regions hybridize to form a circular dsDNA intermediate. Strand displacement synthesis by RT to the PBS and PPT ends produces a blunt ended, linear dsDNA copy of the viral genome that includes long terminal repeats (LTRs) at both ends. Functionally, catalyzes viral DNA integration into the host chromosome, by performing a series of DNA cutting and joining reactions. The sequence is that of Gag-Pro-Pol polyprotein (pol) from Macaca mulatta (Rhesus macaque).